Consider the following 238-residue polypeptide: Endonuclease V (238 aa).

Residues Asp46 and Asp116 each contribute to the Mg(2+) site.

Belongs to the endonuclease V family. Requires Mg(2+) as cofactor.

The protein resides in the cytoplasm. It carries out the reaction Endonucleolytic cleavage at apurinic or apyrimidinic sites to products with a 5'-phosphate.. Functionally, DNA repair enzyme involved in the repair of deaminated bases. Selectively cleaves double-stranded DNA at the second phosphodiester bond 3' to a deoxyinosine leaving behind the intact lesion on the nicked DNA. The polypeptide is Endonuclease V (Bacillus velezensis (strain DSM 23117 / BGSC 10A6 / LMG 26770 / FZB42) (Bacillus amyloliquefaciens subsp. plantarum)).